We begin with the raw amino-acid sequence, 312 residues long: Protoheme IX farnesyltransferase 2 (312 aa).

8 helical membrane-spanning segments follow: residues Val31 to His51, Pro52 to Leu72, Ala119 to Ile139, Ile152 to Gly172, Leu179 to Phe199, Ile225 to Phe245, Trp247 to Val267, and Leu283 to Val303.

Belongs to the UbiA prenyltransferase family. Protoheme IX farnesyltransferase subfamily.

The protein resides in the cell inner membrane. It catalyses the reaction heme b + (2E,6E)-farnesyl diphosphate + H2O = Fe(II)-heme o + diphosphate. It functions in the pathway porphyrin-containing compound metabolism; heme O biosynthesis; heme O from protoheme: step 1/1. Its function is as follows. Converts heme B (protoheme IX) to heme O by substitution of the vinyl group on carbon 2 of heme B porphyrin ring with a hydroxyethyl farnesyl side group. The polypeptide is Protoheme IX farnesyltransferase 2 (Nitrobacter winogradskyi (strain ATCC 25391 / DSM 10237 / CIP 104748 / NCIMB 11846 / Nb-255)).